Reading from the N-terminus, the 962-residue chain is Protein lin-36 (962 aa).

2 disordered regions span residues 1-53 (MSEE…ETEG) and 74-99 (TSSGEVLDESQVTPTKQASSSQPREE). Residues 23–40 (DSHVTVHSVEQDSQHSGE) are compositionally biased toward basic and acidic residues. A compositionally biased stretch (polar residues) spans 74-95 (TSSGEVLDESQVTPTKQASSSQ). Residues 161 to 249 (LTHKPCTVCN…IEAFGVPVAI (89 aa)) form a THAP-type zinc finger. Basic and acidic residues-rich tracts occupy residues 452–472 (KAEESAQGTKEQESSQKKHAE) and 534–570 (SHEEEHDPTPESVEREPTVSPNDPRERLRLKERDEQF). Disordered regions lie at residues 452-575 (KAEE…KMVQ), 612-676 (IAAT…PEER), 744-788 (QEKG…SASS), and 932-962 (DPKWRELQQQQQQQQQQQEQFPGQGSSDSQQ). A compositionally biased stretch (low complexity) spans 626-637 (SSEQTPEPTTSQ). The segment covering 647-658 (KTKESAVQKVEK) has biased composition (basic and acidic residues). The segment covering 939 to 951 (QQQQQQQQQQQEQ) has biased composition (low complexity). Positions 952–962 (FPGQGSSDSQQ) are enriched in polar residues.

As to expression, expressed in vulval precursor P(3-8).p cells and their descendants, neurons of the head, tail and ventral cord, hypodermal and intestinal cells and germline cells.

The protein resides in the nucleus. Required to negatively regulate vulval development. Antagonizes Ras-mediated vulval induction. Acts cell autonomously. This is Protein lin-36 (lin-36) from Caenorhabditis elegans.